Here is a 368-residue protein sequence, read N- to C-terminus: MQPGSSRCEEETPSLLWGLDPVFLAFAKLYIRDILDMKESRQVPGVFLYNGHPIKQVDVLGTVIGVRERDAFYSYGVDDSTGVINCICWKKLNTESVSAAPSAARELSLTSQLKKLQETIEQKTKIEIGDTIRVRGSIRTYREEREIHATTYYKVDDPVWNIQIARMLELPTIYRKVYDQPFHSSALEKEEALSNPGALDLPSLTSLLSEKAKEFLMENRVQSFYQQELEMVESLLSLANQPVIHSASSDQVNFKKDTTSKAIHSIFKNAIQLLQEKGLVFQKDDGFDNLYYVTREDKDLHRKIHRIIQQDCQKPNHMEKGCHFLHILACARLSIRPGLSEAVLQQVLELLEDQSDIVSTMEHYYTAF.

Residues 1-185 form an interaction with CTC1 region; sequence MQPGSSRCEE…KVYDQPFHSS (185 aa). The segment at residues 57-155 is a DNA-binding region (OB); that stretch reads VDVLGTVIGV…EIHATTYYKV (99 aa). 2 winged helix-turn-helix (wHTH) regions span residues 191-295 and 296-368; these read EALS…YVTR and EDKD…YTAF.

The protein belongs to the STN1 family. Component of the CST complex, composed of TEN1/C17orf106, CTC1/C17orf68 and STN1; in the complex interacts directly with TEN1 and CTC1. Interacts with ACD/TPP1, POT1 and POLA1.

Its subcellular location is the nucleus. It localises to the chromosome. The protein resides in the telomere. Functionally, component of the CST complex proposed to act as a specialized replication factor promoting DNA replication under conditions of replication stress or natural replication barriers such as the telomere duplex. The CST complex binds single-stranded DNA with high affinity in a sequence-independent manner, while isolated subunits bind DNA with low affinity by themselves. Initially the CST complex has been proposed to protect telomeres from DNA degradation. However, the CST complex has been shown to be involved in several aspects of telomere replication. The CST complex inhibits telomerase and is involved in telomere length homeostasis; it is proposed to bind to newly telomerase-synthesized 3' overhangs and to terminate telomerase action implicating the association with the ACD:POT1 complex thus interfering with its telomerase stimulation activity. The CST complex is also proposed to be involved in fill-in synthesis of the telomeric C-strand probably implicating recruitment and activation of DNA polymerase alpha. The CST complex facilitates recovery from many forms of exogenous DNA damage; seems to be involved in the re-initiation of DNA replication at repaired forks and/or dormant origins. Required for efficicient replication of the duplex region of the telomere. Promotes efficient replication of lagging-strand telomeres. Promotes general replication start following replication-fork stalling implicating new origin firing. May be in involved in C-strand fill-in during late S/G2 phase independent of its role in telomere duplex replication. Its function is as follows. Component of the CST complex, a complex that binds to single-stranded DNA and is required to protect telomeres from DNA degradation. The CST complex binds single-stranded DNA with high affinity in a sequence-independent manner, while isolated subunits bind DNA with low affinity by themselves. In addition to telomere protection, the CST complex has probably a more general role in DNA metabolism at non-telomeric sites. This is CST complex subunit STN1 from Homo sapiens (Human).